Consider the following 307-residue polypeptide: MSVVSSVTVTVPATTANLGPGFDCIGAALTLYNKVKFTRLDAGGLIIHVTGKEAEGVNTDESNLLYQAFVKLYQHIEQIPPSVKIEIDLGVPLARGLGSSATAIVGGLVAANQLAGEPLSQLQVMELAIAMEGHPDNVVPALLGGCRLAATSAEGWEICDVPWDENVVPVVAIPDFELSTQEARRVLPTEFSRADAIFNTAHLGLLLRGLATGKGEWLKTALQDKLHQPYRKALIPGYDAVNQAAVAAGAYGMVISGAGPTLLALADAQNSQAVAAAMQTAWQTVGITADVRSLSLDNQGASSLNEG.

92 to 102 (PLARGLGSSAT) contributes to the ATP binding site.

Belongs to the GHMP kinase family. Homoserine kinase subfamily.

It is found in the cytoplasm. It catalyses the reaction L-homoserine + ATP = O-phospho-L-homoserine + ADP + H(+). Its pathway is amino-acid biosynthesis; L-threonine biosynthesis; L-threonine from L-aspartate: step 4/5. Catalyzes the ATP-dependent phosphorylation of L-homoserine to L-homoserine phosphate. The polypeptide is Homoserine kinase (thrB) (Microchaete diplosiphon (Fremyella diplosiphon)).